Consider the following 267-residue polypeptide: MASSEETPRSLAGKVALVTGAGRGIGKGIALELAKRGASLVVNYNSAEKPAQEVVDEISKTGSRAVAIKADITKVPEVSRLFQEALRHFGHLDIVVSNSGTEVFKPEEEVTEEDYDRVFNLNTRAQFFIAQHAYVHLRDGGRIVLMSSVAANMSGIPNHALYAGSKAAVEGFTRSFAVDAGHRKITVNAIAPGGVKTDMYDANAWHYVPNGKPGMPMEEIDKGLAAFCPLGRVAVPQDIGRVVAFLAHPDSEWVNGQVILLTGGSVT.

Residues isoleucine 25, asparagine 45, aspartate 71, and asparagine 98 each contribute to the NADP(+) site. Catalysis depends on proton donor residues serine 147 and serine 148. 4 residues coordinate NADP(+): tyrosine 162, lysine 166, valine 195, and threonine 197. The Proton acceptor role is filled by tyrosine 162. The active-site Lowers pKa of active site Tyr is lysine 166.

Belongs to the short-chain dehydrogenases/reductases (SDR) family.

Its function is as follows. Hydroxynaphthalene reductase-like protein; part of the Pks2 gene cluster that mediates the formation of infectious structures (appressoria), enabling these fungi to kill insects faster. The product of the Pks2 gene cluster is different from the one of Pks1 and has still not been identified. The chain is Hydroxynaphthalene reductase-like protein Arp2 from Metarhizium brunneum (strain ARSEF 3297).